A 62-amino-acid polypeptide reads, in one-letter code: UPF0434 protein BP2767 (62 aa).

The protein belongs to the UPF0434 family.

The protein is UPF0434 protein BP2767 of Bordetella pertussis (strain Tohama I / ATCC BAA-589 / NCTC 13251).